The primary structure comprises 147 residues: Bis(5'-nucleosyl)-tetraphosphatase [asymmetrical] (147 aa).

Position 2 is an N-acetylalanine (Ala-2). In terms of domain architecture, Nudix hydrolase spans 2–139 (ALRACGLIIF…EMKATLQEGH (138 aa)). The Nudix box signature appears at 43–64 (GHVDPGENDLETALRETQEETG).

The protein belongs to the Nudix hydrolase family. The cofactor is a divalent metal cation.

The catalysed reaction is P(1),P(4)-bis(5'-guanosyl) tetraphosphate + H2O = GMP + GTP + 2 H(+). The enzyme catalyses a 5'-end CoA-ribonucleoside in mRNA + H2O = a 5'-end phospho-adenosine-phospho-ribonucleoside in mRNA + (R)-4'-phosphopantetheine + 2 H(+). It catalyses the reaction a 5'-end FAD-phospho-ribonucleoside in mRNA + H2O = a 5'-end phospho-adenosine-phospho-ribonucleoside in mRNA + FMN + 2 H(+). In terms of biological role, catalyzes the asymmetric hydrolysis of diadenosine 5',5'''-P1,P4-tetraphosphate (Ap4A) to yield AMP and ATP. Exhibits decapping activity towards FAD-capped RNAs and dpCoA-capped RNAs in vitro. The protein is Bis(5'-nucleosyl)-tetraphosphatase [asymmetrical] (Nudt2) of Rattus norvegicus (Rat).